Reading from the N-terminus, the 360-residue chain is G-protein coupled receptor 183 (360 aa).

Residues methionine 1 to arginine 30 are Extracellular-facing. Asparagine 7 carries N-linked (GlcNAc...) asparagine glycosylation. The chain crosses the membrane as a helical span at residues isoleucine 31–isoleucine 56. Residues glutamine 57–aspartate 76 are Cytoplasmic-facing. Residues isoleucine 77 to phenylalanine 94 traverse the membrane as a helical segment. Position 86 (arginine 86) interacts with 7alpha,25-dihydroxycholesterol. Residues aspartate 95 to arginine 104 lie on the Extracellular side of the membrane. Cysteine 103 and cysteine 180 are joined by a disulfide. The helical transmembrane segment at isoleucine 105–isoleucine 126 threads the bilayer. 7alpha,25-dihydroxycholesterol-binding residues include tyrosine 111 and tyrosine 115. The interaction with G proteins stretch occupies residues serine 125–valine 133. Residues aspartate 127 to lysine 148 are Cytoplasmic-facing. The helical transmembrane segment at cysteine 149–isoleucine 167 threads the bilayer. The Extracellular segment spans residues asparagine 168–serine 191. The helical transmembrane segment at leucine 192–cysteine 214 threads the bilayer. Topologically, residues tyrosine 215–lysine 240 are cytoplasmic. The helical transmembrane segment at alanine 241–isoleucine 264 threads the bilayer. 7alpha,25-dihydroxycholesterol is bound at residue tyrosine 259. At glutamine 265–glutamine 286 the chain is on the extracellular side. A helical membrane pass occupies residues isoleucine 287–cysteine 311. Residues lysine 312–lysine 360 are Cytoplasmic-facing. Phosphoserine is present on serine 327. The disordered stretch occupies residues glutamate 339–lysine 360. Residues glutamate 347–lysine 360 show a composition bias toward polar residues.

This sequence belongs to the G-protein coupled receptor 1 family. In terms of assembly, homodimer and heterodimer. Heterodimerizes with CXCR5; leading to modulate the interaction between of CXCL13 and CXCR5.

Its subcellular location is the cell membrane. In terms of biological role, G-protein coupled receptor expressed in lymphocytes that acts as a chemotactic receptor for B-cells, T-cells, splenic dendritic cells, monocytes/macrophages and astrocytes. Receptor for oxysterol 7-alpha,25-dihydroxycholesterol (7-alpha,25-OHC) and other related oxysterols. Mediates cell positioning and movement of a number of cells by binding the 7-alpha,25-OHC ligand that forms a chemotactic gradient. Binding of 7-alpha,25-OHC mediates the correct localization of B-cells during humoral immune responses. Guides B-cell movement along the B-cell zone-T-cell zone boundary and later to interfollicular and outer follicular regions. Its specific expression during B-cell maturation helps position B-cells appropriately for mounting T-dependent antibody responses. Collaborates with CXCR5 to mediate B-cell migration; probably by forming a heterodimer with CXCR5 that affects the interaction between of CXCL13 and CXCR5. Also acts as a chemotactic receptor for some T-cells upon binding to 7-alpha,25-OHC ligand. Promotes follicular helper T (Tfh) cells differentiation by positioning activated T-cells at the follicle-T-zone interface, promoting contact of newly activated CD4 T-cells with activated dendritic cells and exposing them to Tfh-cell-promoting inducible costimulator (ICOS) ligand. Expression in splenic dendritic cells is required for their homeostasis, localization and ability to induce B- and T-cell responses: GPR183 acts as a chemotactic receptor in dendritic cells that mediates the accumulation of CD4(+) dendritic cells in bridging channels. Regulates migration of astrocytes and is involved in communication between astrocytes and macrophages. Promotes osteoclast precursor migration to bone surfaces. Signals constitutively through G(i)-alpha, but not G(s)-alpha or G(q)-alpha. Signals constitutively also via MAPK1/3 (ERK1/2). The polypeptide is G-protein coupled receptor 183 (GPR183) (Bos taurus (Bovine)).